The primary structure comprises 324 residues: tRNA dimethylallyltransferase (324 aa).

Position 17 to 24 (17 to 24) interacts with ATP; it reads GPTASGKT. Substrate is bound at residue 19 to 24; the sequence is TASGKT. Interaction with substrate tRNA regions lie at residues 42–45, 166–170, and 251–256; these read DSAL, QRIQR, and RCVGYR.

This sequence belongs to the IPP transferase family. As to quaternary structure, monomer. Requires Mg(2+) as cofactor.

The catalysed reaction is adenosine(37) in tRNA + dimethylallyl diphosphate = N(6)-dimethylallyladenosine(37) in tRNA + diphosphate. Functionally, catalyzes the transfer of a dimethylallyl group onto the adenine at position 37 in tRNAs that read codons beginning with uridine, leading to the formation of N6-(dimethylallyl)adenosine (i(6)A). In Burkholderia thailandensis (strain ATCC 700388 / DSM 13276 / CCUG 48851 / CIP 106301 / E264), this protein is tRNA dimethylallyltransferase.